The primary structure comprises 244 residues: DNA repair protein RecO (244 aa).

It belongs to the RecO family.

Its function is as follows. Involved in DNA repair and RecF pathway recombination. This Koribacter versatilis (strain Ellin345) protein is DNA repair protein RecO.